The following is a 329-amino-acid chain: Mas-related G-protein coupled receptor member X2 (329 aa).

Topologically, residues 1–33 are extracellular; sequence MDPTTPAWGTESTTMNGNDQALPLLCGKETMIS. The helical transmembrane segment at 34 to 54 threads the bilayer; it reads VFLILFIALVGLVGNAFVLWL. Residues 55-63 are Cytoplasmic-facing; that stretch reads LGFRMRRNA. Residues 64 to 84 traverse the membrane as a helical segment; it reads FSVYVLSLAGADFLFLCFQMT. Residues 85–96 are Extracellular-facing; that stretch reads SCLAYLINFFGS. Residues 97–116 traverse the membrane as a helical segment; it reads ISINIPSFFTVMTCAYLAGL. The Cytoplasmic segment spans residues 117–143; it reads SMLSAISTERCLSVLWPIWYRCRRPRH. Residues 144-164 form a helical membrane-spanning segment; the sequence is LSAVMCVLLWALSLLLSILEG. Topologically, residues 165 to 183 are extracellular; the sequence is KFCGFLFSDDDPGWCQTFD. The chain crosses the membrane as a helical span at residues 184–204; it reads FITAAWLMFLFVVLCGSSLAL. At 205 to 227 the chain is on the cytoplasmic side; it reads LVRILCGSRSLPLTRLYLTILLT. Residues 228–248 traverse the membrane as a helical segment; the sequence is VLIFLLCGLPFGIQWFLILWI. The Extracellular portion of the chain corresponds to 249–263; it reads WKNSVVLFCHIHPIS. The helical transmembrane segment at 264-284 threads the bilayer; it reads VVLSSFNSSANPIIYFFVGSF. Residues 285-329 lie on the Cytoplasmic side of the membrane; it reads RKQWRLRQPILKLALQRALQDTAEVDHSEGCFSQGTLEMSRSSLV.

It belongs to the G-protein coupled receptor 1 family. Mas subfamily.

The protein resides in the cell membrane. Mast cell-specific receptor for basic secretagogues, i.e. cationic amphiphilic drugs, as well as endo- or exogenous peptides, consisting of a basic head group and a hydrophobic core. Recognizes and binds small molecules containing a cyclized tetrahydroisoquinoline (THIQ), such as non-steroidal neuromuscular blocking drugs (NMBDs), including tubocurarine and atracurium. In response to these compounds, mediates pseudo-allergic reactions characterized by histamine release, inflammation and airway contraction. This is Mas-related G-protein coupled receptor member X2 (MRGPRX2) from Macaca mulatta (Rhesus macaque).